The sequence spans 160 residues: MVIGRKAGIIIYVMHALLLLLLSFTFALEPLSEWWSKAKEVCLYGKYKNYDGTLRDIKPFCCKVERVEVEPIKGLLKGKFGLKESLKVIASCNGAFYGVMSYDGTILAVGGKKGIVKETPSGVMEVEDEKTIHFVVCRSGASLEGCYGEVFAEGYIIKKK.

Residues 1 to 27 form the signal peptide; that stretch reads MVIGRKAGIIIYVMHALLLLLLSFTFA.

This is an uncharacterized protein from Aquifex aeolicus (strain VF5).